The sequence spans 344 residues: Dihydroorotate dehydrogenase (quinone) (344 aa).

Residues 64-68 and Thr88 each bind FMN; that span reads AGLDK. Position 68 (Lys68) interacts with substrate. 113 to 117 is a binding site for substrate; the sequence is NRMGF. Positions 144 and 177 each coordinate FMN. Asn177 is a binding site for substrate. Ser180 serves as the catalytic Nucleophile. Asn182 is a substrate binding site. 2 residues coordinate FMN: Lys222 and Thr250. 251 to 252 contacts substrate; the sequence is NT. FMN-binding positions include Gly273, Gly302, and 323–324; that span reads YS.

It belongs to the dihydroorotate dehydrogenase family. Type 2 subfamily. In terms of assembly, monomer. FMN serves as cofactor.

The protein resides in the cell membrane. The enzyme catalyses (S)-dihydroorotate + a quinone = orotate + a quinol. The protein operates within pyrimidine metabolism; UMP biosynthesis via de novo pathway; orotate from (S)-dihydroorotate (quinone route): step 1/1. Catalyzes the conversion of dihydroorotate to orotate with quinone as electron acceptor. The chain is Dihydroorotate dehydrogenase (quinone) from Polynucleobacter necessarius subsp. necessarius (strain STIR1).